The following is an 83-amino-acid chain: Cytochrome c oxidase subunit 7A2, mitochondrial (83 aa).

A mitochondrion-targeting transit peptide spans 1–23 (MLRNLLALRQIGQRTISTASRRH). At 24 to 48 (FKNKVPEKQKLFQEDDEIPLYLKGG) the chain is on the mitochondrial matrix side. Lys-33 bears the N6-acetyllysine mark. A helical transmembrane segment spans residues 49-77 (VADALLYRATMILTVGGTAYAIYELAVAS). Over 78–83 (FPKKQE) the chain is Mitochondrial intermembrane.

It belongs to the cytochrome c oxidase VIIa family. Component of the cytochrome c oxidase (complex IV, CIV), a multisubunit enzyme composed of 14 subunits. The complex is composed of a catalytic core of 3 subunits MT-CO1, MT-CO2 and MT-CO3, encoded in the mitochondrial DNA, and 11 supernumerary subunits COX4I1 (or COX4I2), COX5A, COX5B, COX6A1 (or COX6A2), COX6B1 (or COX6B2), COX6C, COX7A2 (or COX7A1), COX7B, COX7C, COX8A and NDUFA4, which are encoded in the nuclear genome. The complex exists as a monomer or a dimer and forms supercomplexes (SCs) in the inner mitochondrial membrane with NADH-ubiquinone oxidoreductase (complex I, CI) and ubiquinol-cytochrome c oxidoreductase (cytochrome b-c1 complex, complex III, CIII), resulting in different assemblies (supercomplex SCI(1)III(2)IV(1) and megacomplex MCI(2)III(2)IV(2)). Interacts with PET100.

It localises to the mitochondrion inner membrane. Its pathway is energy metabolism; oxidative phosphorylation. In terms of biological role, component of the cytochrome c oxidase, the last enzyme in the mitochondrial electron transport chain which drives oxidative phosphorylation. The respiratory chain contains 3 multisubunit complexes succinate dehydrogenase (complex II, CII), ubiquinol-cytochrome c oxidoreductase (cytochrome b-c1 complex, complex III, CIII) and cytochrome c oxidase (complex IV, CIV), that cooperate to transfer electrons derived from NADH and succinate to molecular oxygen, creating an electrochemical gradient over the inner membrane that drives transmembrane transport and the ATP synthase. Cytochrome c oxidase is the component of the respiratory chain that catalyzes the reduction of oxygen to water. Electrons originating from reduced cytochrome c in the intermembrane space (IMS) are transferred via the dinuclear copper A center (CU(A)) of subunit 2 and heme A of subunit 1 to the active site in subunit 1, a binuclear center (BNC) formed by heme A3 and copper B (CU(B)). The BNC reduces molecular oxygen to 2 water molecules using 4 electrons from cytochrome c in the IMS and 4 protons from the mitochondrial matrix. The chain is Cytochrome c oxidase subunit 7A2, mitochondrial (COX7A2) from Homo sapiens (Human).